Reading from the N-terminus, the 441-residue chain is Arginine biosynthesis bifunctional protein ArgJ, mitochondrial (441 aa).

Residues Thr-178, Lys-204, Thr-215, Glu-304, Asn-436, and Ser-441 each coordinate substrate. Thr-215 (nucleophile) is an active-site residue.

This sequence belongs to the ArgJ family. Heterodimer of an alpha and a beta chain. The alpha and beta chains are autoproteolytically processed from a single precursor protein within the mitochondrion.

The protein localises to the mitochondrion matrix. The enzyme catalyses N(2)-acetyl-L-ornithine + L-glutamate = N-acetyl-L-glutamate + L-ornithine. It carries out the reaction L-glutamate + acetyl-CoA = N-acetyl-L-glutamate + CoA + H(+). It functions in the pathway amino-acid biosynthesis; L-arginine biosynthesis; L-ornithine and N-acetyl-L-glutamate from L-glutamate and N(2)-acetyl-L-ornithine (cyclic): step 1/1. Its pathway is amino-acid biosynthesis; L-arginine biosynthesis; N(2)-acetyl-L-ornithine from L-glutamate: step 1/4. Functionally, catalyzes two activities which are involved in the cyclic version of arginine biosynthesis: the synthesis of acetylglutamate from glutamate and acetyl-CoA, and of ornithine by transacetylation between acetylornithine and glutamate. This Lodderomyces elongisporus (strain ATCC 11503 / CBS 2605 / JCM 1781 / NBRC 1676 / NRRL YB-4239) (Yeast) protein is Arginine biosynthesis bifunctional protein ArgJ, mitochondrial.